The sequence spans 615 residues: RUN domain-containing protein 1 (615 aa).

The segment at 15 to 41 (TAVGPKAKDEEEEEEEEESLPPCETVR) is disordered. The segment covering 24–33 (EEEEEEEEES) has biased composition (acidic residues). The residue at position 73 (Ser-73) is a Phosphoserine. Coiled-coil stretches lie at residues 76–102 (DATV…LSSH) and 163–238 (RVRG…NLNE). The segment at 147–180 (DPCGGDESDVLPGDRPRVRGEDQSEQEKRERLET) is disordered. Positions 158–180 (PGDRPRVRGEDQSEQEKRERLET) are enriched in basic and acidic residues. The region spanning 423-604 (ELTTVVRKEL…LKFSLPVDLA (182 aa)) is the RUN domain. Ser-499 bears the Phosphoserine mark.

Functionally, may play a role as p53/TP53 inhibitor and thus may have oncogenic activity. This Mus musculus (Mouse) protein is RUN domain-containing protein 1 (Rundc1).